Here is a 119-residue protein sequence, read N- to C-terminus: Large ribosomal subunit protein uL22 (119 aa).

Belongs to the universal ribosomal protein uL22 family. In terms of assembly, part of the 50S ribosomal subunit.

This protein binds specifically to 23S rRNA; its binding is stimulated by other ribosomal proteins, e.g. L4, L17, and L20. It is important during the early stages of 50S assembly. It makes multiple contacts with different domains of the 23S rRNA in the assembled 50S subunit and ribosome. Functionally, the globular domain of the protein is located near the polypeptide exit tunnel on the outside of the subunit, while an extended beta-hairpin is found that lines the wall of the exit tunnel in the center of the 70S ribosome. This is Large ribosomal subunit protein uL22 from Rickettsia prowazekii (strain Madrid E).